We begin with the raw amino-acid sequence, 85 residues long: uncharacterized protein (85 aa).

The protein to A.fulgidus AF_0255 and AF_1363.

This is an uncharacterized protein from Archaeoglobus fulgidus (strain ATCC 49558 / DSM 4304 / JCM 9628 / NBRC 100126 / VC-16).